Consider the following 546-residue polypeptide: Chaperonin GroEL (546 aa).

Residues 30 to 33 (TLGP), K51, 87 to 91 (DGTTT), G415, 479 to 481 (NAA), and D495 each bind ATP. The interval 527 to 546 (EEKPDVSASSGGMGGMGGMM) is disordered. The segment covering 537-546 (GGMGGMGGMM) has biased composition (gly residues).

Belongs to the chaperonin (HSP60) family. As to quaternary structure, forms a cylinder of 14 subunits composed of two heptameric rings stacked back-to-back. Interacts with the co-chaperonin GroES.

It is found in the cytoplasm. It carries out the reaction ATP + H2O + a folded polypeptide = ADP + phosphate + an unfolded polypeptide.. Its function is as follows. Together with its co-chaperonin GroES, plays an essential role in assisting protein folding. The GroEL-GroES system forms a nano-cage that allows encapsulation of the non-native substrate proteins and provides a physical environment optimized to promote and accelerate protein folding. The polypeptide is Chaperonin GroEL (Baumannia cicadellinicola subsp. Homalodisca coagulata).